Consider the following 335-residue polypeptide: 7,8-didemethyl-8-hydroxy-5-deazariboflavin synthase (335 aa).

The 246-residue stretch at 1–246 (MTYSKNVFIP…QVAPNLIDPK (246 aa)) folds into the Radical SAM core domain. Residues cysteine 15, cysteine 19, and cysteine 22 each contribute to the [4Fe-4S] cluster site.

The protein belongs to the radical SAM superfamily. CofG family. Consists of two subunits, CofG and CofH. [4Fe-4S] cluster is required as a cofactor.

The enzyme catalyses 5-amino-5-(4-hydroxybenzyl)-6-(D-ribitylimino)-5,6-dihydrouracil + S-adenosyl-L-methionine = 7,8-didemethyl-8-hydroxy-5-deazariboflavin + 5'-deoxyadenosine + L-methionine + NH4(+) + H(+). It participates in cofactor biosynthesis; coenzyme F0 biosynthesis. In terms of biological role, catalyzes the radical-mediated synthesis of 7,8-didemethyl-8-hydroxy-5-deazariboflavin from 5-amino-5-(4-hydroxybenzyl)-6-(D-ribitylimino)-5,6-dihydrouracil. This chain is 7,8-didemethyl-8-hydroxy-5-deazariboflavin synthase, found in Methanosarcina mazei (strain ATCC BAA-159 / DSM 3647 / Goe1 / Go1 / JCM 11833 / OCM 88) (Methanosarcina frisia).